Reading from the N-terminus, the 529-residue chain is Bifunctional purine biosynthesis protein PurH (529 aa).

Positions 1-148 (MQQRRPVRRA…KNHKDVAIVV (148 aa)) constitute an MGS-like domain.

The protein belongs to the PurH family.

The catalysed reaction is (6R)-10-formyltetrahydrofolate + 5-amino-1-(5-phospho-beta-D-ribosyl)imidazole-4-carboxamide = 5-formamido-1-(5-phospho-D-ribosyl)imidazole-4-carboxamide + (6S)-5,6,7,8-tetrahydrofolate. The enzyme catalyses IMP + H2O = 5-formamido-1-(5-phospho-D-ribosyl)imidazole-4-carboxamide. The protein operates within purine metabolism; IMP biosynthesis via de novo pathway; 5-formamido-1-(5-phospho-D-ribosyl)imidazole-4-carboxamide from 5-amino-1-(5-phospho-D-ribosyl)imidazole-4-carboxamide (10-formyl THF route): step 1/1. Its pathway is purine metabolism; IMP biosynthesis via de novo pathway; IMP from 5-formamido-1-(5-phospho-D-ribosyl)imidazole-4-carboxamide: step 1/1. The polypeptide is Bifunctional purine biosynthesis protein PurH (Salmonella paratyphi B (strain ATCC BAA-1250 / SPB7)).